Reading from the N-terminus, the 1085-residue chain is KN motif and ankyrin repeat domain-containing protein 2 (1085 aa).

A compositionally biased stretch (basic and acidic residues) spans 136–145 (KLEEEKDGRR). The disordered stretch occupies residues 136–192 (KLEEEKDGRRFSNLGSMHSSMAGSNTSLSSAHSFNRAQGGGSYTPMSSGLSTPVSPT). Polar residues-rich tracts occupy residues 148 to 171 (NLGSMHSSMAGSNTSLSSAHSFNR) and 179 to 189 (TPMSSGLSTPV). Residues 196–216 (LQHVREQMAVALRKIRELEEQ) adopt a coiled-coil conformation. The interval 273–295 (NGAGAANKATGSLSPTTPGSLQD) is disordered. Positions 281 to 295 (ATGSLSPTTPGSLQD) are enriched in polar residues. The stretch at 356 to 383 (VGLLEVQLRKTMQELQSAQQQVEAAQKE) forms a coiled coil. Disordered regions lie at residues 557 to 736 (RKAD…SNVQ), 752 to 791 (TTTQTQFTSAKPQQEASQSKTADLTAQKGATHSTDGSAKQ), and 798 to 817 (TTKPAADTATPPTNKQTDSL). Acidic residues predominate over residues 589–600 (SSSESSEDESDA). The segment covering 601 to 611 (SEYHEATEKLP) has biased composition (basic and acidic residues). Residues 614-648 (ATPQSLVSSCIPQLASETPATQTAQHSTAQIPTNH) show a composition bias toward polar residues. The span at 649 to 668 (TPAAQTTSQSHTTDATTQQH) shows a compositional bias: low complexity. 2 stretches are compositionally biased toward polar residues: residues 706 to 736 (NPPSTATSLEQNSVQLSSATQQSKATDSNVQ) and 760 to 788 (SAKPQQEASQSKTADLTAQKGATHSTDGS). Residues 798–810 (TTKPAADTATPPT) show a composition bias toward low complexity. ANK repeat units follow at residues 895–925 (NGNTALHYTVSHSNFPVVKLLLDTGLCNADK), 929–962 (AGYTAIMLTALAAFSSDSDLQTVLQLLRTGDVNA), 967–996 (AGQTALMLAVSHGRGDMVKALLACGAQVNL), 1000–1030 (DGSTALMCACEHGHVDIVRQLLSVPGCDATL), and 1034–1063 (DGSTALSIALEASQNDIAVLLYAHLNFAKP). Positions 1064-1085 (PSPVSPKSPILGSSPPSSSELK) are disordered. Residues 1070–1085 (KSPILGSSPPSSSELK) are compositionally biased toward low complexity.

It is found in the cytoplasm. The protein resides in the mitochondrion. Functionally, may be involved in different biological processes including transcription and apoptosis by sequestering specific proteins outside of the nucleus. Involved in actin stress fibers formation probably through its interaction with ARHGDIA and the regulation of the Rho signaling pathway. May thereby play a role in cell adhesion and migration, regulating for instance podocytes migration during development of the kidney. This chain is KN motif and ankyrin repeat domain-containing protein 2 (kank2), found in Danio rerio (Zebrafish).